The sequence spans 367 residues: MNVYTPDIDKLPNRDEAATALATLRAWAQTASAAEIETLDPSVARLLPGDPSDYPSLARAYPEEFSVDAAYKDSLPDLQNGPSSLIRGAKAQIQHVGISNFRLPIRFHTRDNGDVTLETSVTGSVSLEAEKKGINMSRIMRTFYGHADETFSFEVIERTLDAYKSDLESFDARIQMRFSFPMKVESLRSGLSGYQYYDIALEVVDVNGQRRKFMHLDYVYSSTCPCSLELSEHARQFRGQLATPHSQRSVARVSVELTCGADDCLWFEDLVELCREAIPTETQVMVKREDEQAFAELNAANPIFVEDAARSFCLALQRDDRIGDFRVVASHQESLHSHDAVSVLTEGPTFASDSLDPRLFQTLFHVG.

Belongs to the GTP cyclohydrolase IV family.

It carries out the reaction GTP + H2O = 7,8-dihydroneopterin 3'-triphosphate + formate + H(+). It functions in the pathway cofactor biosynthesis; 7,8-dihydroneopterin triphosphate biosynthesis; 7,8-dihydroneopterin triphosphate from GTP: step 1/1. Converts GTP to 7,8-dihydroneopterin triphosphate. This is GTP cyclohydrolase FolE2 from Dinoroseobacter shibae (strain DSM 16493 / NCIMB 14021 / DFL 12).